The sequence spans 359 residues: Oxopyrrolidines biosynthesis cluster protein G (359 aa).

Residues 1–32 form a disordered region; sequence MDHLRDSLLSSLPRDSPSIGAMDYARRDREST. Residues 7-18 are compositionally biased toward low complexity; sequence SLLSSLPRDSPS.

Functionally, part of the gene cluster that mediates the biosynthesis of oxopyrrolidines, polyketide-amino acid hybrid compounds with feature structures of tetramic acid. Does not seem to play a role in oxopyrrolidines A and B biosynthesis. The chain is Oxopyrrolidines biosynthesis cluster protein G from Penicillium oxalicum (strain 114-2 / CGMCC 5302) (Penicillium decumbens).